A 995-amino-acid polypeptide reads, in one-letter code: Bifunctional glutamine synthetase adenylyltransferase/adenylyl-removing enzyme (995 aa).

The interval 1–487 (MNVTKPATQR…LHAKLFYQPL (487 aa)) is adenylyl removase. Residues 492–995 (APAGLEIAGR…KAVVRKVFGS (504 aa)) are adenylyl transferase.

This sequence belongs to the GlnE family. Mg(2+) serves as cofactor.

It carries out the reaction [glutamine synthetase]-O(4)-(5'-adenylyl)-L-tyrosine + phosphate = [glutamine synthetase]-L-tyrosine + ADP. The enzyme catalyses [glutamine synthetase]-L-tyrosine + ATP = [glutamine synthetase]-O(4)-(5'-adenylyl)-L-tyrosine + diphosphate. Functionally, involved in the regulation of glutamine synthetase GlnA, a key enzyme in the process to assimilate ammonia. When cellular nitrogen levels are high, the C-terminal adenylyl transferase (AT) inactivates GlnA by covalent transfer of an adenylyl group from ATP to specific tyrosine residue of GlnA, thus reducing its activity. Conversely, when nitrogen levels are low, the N-terminal adenylyl removase (AR) activates GlnA by removing the adenylyl group by phosphorolysis, increasing its activity. The regulatory region of GlnE binds the signal transduction protein PII (GlnB) which indicates the nitrogen status of the cell. This chain is Bifunctional glutamine synthetase adenylyltransferase/adenylyl-removing enzyme, found in Mycobacterium marinum (strain ATCC BAA-535 / M).